The chain runs to 280 residues: 4-hydroxy-3-methylbut-2-enyl diphosphate reductase (280 aa).

Cys12 lines the [4Fe-4S] cluster pocket. (2E)-4-hydroxy-3-methylbut-2-enyl diphosphate contacts are provided by His40 and His72. His40 and His72 together coordinate dimethylallyl diphosphate. Isopentenyl diphosphate is bound by residues His40 and His72. Residue Cys94 coordinates [4Fe-4S] cluster. Residue His122 coordinates (2E)-4-hydroxy-3-methylbut-2-enyl diphosphate. His122 serves as a coordination point for dimethylallyl diphosphate. An isopentenyl diphosphate-binding site is contributed by His122. Catalysis depends on Glu124, which acts as the Proton donor. Residue Thr160 coordinates (2E)-4-hydroxy-3-methylbut-2-enyl diphosphate. Residue Cys188 participates in [4Fe-4S] cluster binding. Ser216, Asn218, and Ser260 together coordinate (2E)-4-hydroxy-3-methylbut-2-enyl diphosphate. Ser216, Asn218, and Ser260 together coordinate dimethylallyl diphosphate. Isopentenyl diphosphate contacts are provided by Ser216, Asn218, and Ser260.

This sequence belongs to the IspH family. The cofactor is [4Fe-4S] cluster.

The catalysed reaction is isopentenyl diphosphate + 2 oxidized [2Fe-2S]-[ferredoxin] + H2O = (2E)-4-hydroxy-3-methylbut-2-enyl diphosphate + 2 reduced [2Fe-2S]-[ferredoxin] + 2 H(+). The enzyme catalyses dimethylallyl diphosphate + 2 oxidized [2Fe-2S]-[ferredoxin] + H2O = (2E)-4-hydroxy-3-methylbut-2-enyl diphosphate + 2 reduced [2Fe-2S]-[ferredoxin] + 2 H(+). It participates in isoprenoid biosynthesis; dimethylallyl diphosphate biosynthesis; dimethylallyl diphosphate from (2E)-4-hydroxy-3-methylbutenyl diphosphate: step 1/1. The protein operates within isoprenoid biosynthesis; isopentenyl diphosphate biosynthesis via DXP pathway; isopentenyl diphosphate from 1-deoxy-D-xylulose 5-phosphate: step 6/6. Catalyzes the conversion of 1-hydroxy-2-methyl-2-(E)-butenyl 4-diphosphate (HMBPP) into a mixture of isopentenyl diphosphate (IPP) and dimethylallyl diphosphate (DMAPP). Acts in the terminal step of the DOXP/MEP pathway for isoprenoid precursor biosynthesis. In Pelobacter propionicus (strain DSM 2379 / NBRC 103807 / OttBd1), this protein is 4-hydroxy-3-methylbut-2-enyl diphosphate reductase.